A 391-amino-acid polypeptide reads, in one-letter code: Dual-specificity RNA methyltransferase RlmN (391 aa).

The active-site Proton acceptor is the glutamate 115. The Radical SAM core domain occupies 121 to 363 (EENRGTLCIS…SPIRTPRGED (243 aa)). The cysteines at positions 128 and 368 are disulfide-linked. [4Fe-4S] cluster contacts are provided by cysteine 135, cysteine 139, and cysteine 142. S-adenosyl-L-methionine is bound by residues 194 to 195 (GE), serine 226, 248 to 250 (SFH), and asparagine 325. Catalysis depends on cysteine 368, which acts as the S-methylcysteine intermediate.

The protein belongs to the radical SAM superfamily. RlmN family. Requires [4Fe-4S] cluster as cofactor.

The protein localises to the cytoplasm. It carries out the reaction adenosine(2503) in 23S rRNA + 2 reduced [2Fe-2S]-[ferredoxin] + 2 S-adenosyl-L-methionine = 2-methyladenosine(2503) in 23S rRNA + 5'-deoxyadenosine + L-methionine + 2 oxidized [2Fe-2S]-[ferredoxin] + S-adenosyl-L-homocysteine. The catalysed reaction is adenosine(37) in tRNA + 2 reduced [2Fe-2S]-[ferredoxin] + 2 S-adenosyl-L-methionine = 2-methyladenosine(37) in tRNA + 5'-deoxyadenosine + L-methionine + 2 oxidized [2Fe-2S]-[ferredoxin] + S-adenosyl-L-homocysteine. Its function is as follows. Specifically methylates position 2 of adenine 2503 in 23S rRNA and position 2 of adenine 37 in tRNAs. m2A2503 modification seems to play a crucial role in the proofreading step occurring at the peptidyl transferase center and thus would serve to optimize ribosomal fidelity. This is Dual-specificity RNA methyltransferase RlmN from Paracoccus denitrificans (strain Pd 1222).